Here is a 233-residue protein sequence, read N- to C-terminus: Cytidylate kinase (233 aa).

15 to 23 contacts ATP; it reads GPSGAGKSS. Residues 183–200 show a composition bias toward basic and acidic residues; the sequence is QRDRQDEGREHAPLKQAE. A disordered region spans residues 183 to 203; it reads QRDRQDEGREHAPLKQAEDAV.

Belongs to the cytidylate kinase family. Type 1 subfamily.

The protein resides in the cytoplasm. It catalyses the reaction CMP + ATP = CDP + ADP. The enzyme catalyses dCMP + ATP = dCDP + ADP. The polypeptide is Cytidylate kinase (Geobacter sp. (strain M21)).